The following is a 205-amino-acid chain: GTP cyclohydrolase-2 (205 aa).

49-53 (RLHSE) is a binding site for GTP. Residues Cys-54, Cys-65, and Cys-67 each coordinate Zn(2+). GTP-binding positions include Gln-70, 92–94 (EGR), and Thr-114. Asp-126 serves as the catalytic Proton acceptor. Arg-128 acts as the Nucleophile in catalysis. GTP contacts are provided by Thr-149 and Lys-154.

This sequence belongs to the GTP cyclohydrolase II family. It depends on Zn(2+) as a cofactor.

It carries out the reaction GTP + 4 H2O = 2,5-diamino-6-hydroxy-4-(5-phosphoribosylamino)-pyrimidine + formate + 2 phosphate + 3 H(+). The protein operates within cofactor biosynthesis; riboflavin biosynthesis; 5-amino-6-(D-ribitylamino)uracil from GTP: step 1/4. Its function is as follows. Catalyzes the conversion of GTP to 2,5-diamino-6-ribosylamino-4(3H)-pyrimidinone 5'-phosphate (DARP), formate and pyrophosphate. This Pseudomonas entomophila (strain L48) protein is GTP cyclohydrolase-2.